Consider the following 151-residue polypeptide: uncharacterized protein (151 aa).

The span at 40 to 57 (QMNRRNSENNTFDASNVG) shows a compositional bias: polar residues. The tract at residues 40 to 125 (QMNRRNSENN…KRQPHYAEPI (86 aa)) is disordered. A compositionally biased stretch (low complexity) spans 83 to 110 (QRQNGRQHQHAGQQQPQHQHTQSQTRQT).

This is an uncharacterized protein from Bacillus subtilis (strain 168).